A 590-amino-acid polypeptide reads, in one-letter code: UvrABC system protein C (590 aa).

A GIY-YIG domain is found at 15 to 98; that stretch reads AEPGVYQFVA…VKRHQPRYNV (84 aa). The 36-residue stretch at 207–242 folds into the UVR domain; it reads GALADPLRREMAAAAQAEAFERAANLRDRLAVVEGF.

It belongs to the UvrC family. Interacts with UvrB in an incision complex.

Its subcellular location is the cytoplasm. Functionally, the UvrABC repair system catalyzes the recognition and processing of DNA lesions. UvrC both incises the 5' and 3' sides of the lesion. The N-terminal half is responsible for the 3' incision and the C-terminal half is responsible for the 5' incision. This Halobacterium salinarum (strain ATCC 29341 / DSM 671 / R1) protein is UvrABC system protein C.